Consider the following 76-residue polypeptide: Bowman-Birk type proteinase inhibitor DE-3 (76 aa).

Disulfide bonds link cysteine 16-cysteine 70, cysteine 17-cysteine 32, cysteine 20-cysteine 66, cysteine 22-cysteine 30, cysteine 40-cysteine 47, cysteine 44-cysteine 59, and cysteine 49-cysteine 57.

Belongs to the Bowman-Birk serine protease inhibitor family.

The sequence is that of Bowman-Birk type proteinase inhibitor DE-3 from Macrotyloma axillare (Perennial horse gram).